Reading from the N-terminus, the 135-residue chain is Basic phospholipase A2 6 (135 aa).

7 disulfides stabilise this stretch: cysteine 28–cysteine 87, cysteine 42–cysteine 134, cysteine 44–cysteine 60, cysteine 59–cysteine 115, cysteine 66–cysteine 108, cysteine 76–cysteine 101, and cysteine 94–cysteine 106. 3 residues coordinate Ca(2+): tyrosine 43, glycine 45, and glycine 47. Histidine 63 is an active-site residue. Aspartate 64 lines the Ca(2+) pocket. The active site involves aspartate 109.

It belongs to the phospholipase A2 family. Group I subfamily. D49 sub-subfamily. It depends on Ca(2+) as a cofactor. In terms of tissue distribution, expressed by the venom gland.

The protein resides in the secreted. The catalysed reaction is a 1,2-diacyl-sn-glycero-3-phosphocholine + H2O = a 1-acyl-sn-glycero-3-phosphocholine + a fatty acid + H(+). Functionally, snake venom phospholipase A2 (PLA2) that inhibits neuromuscular transmission by blocking acetylcholine release from the nerve termini. PLA2 catalyzes the calcium-dependent hydrolysis of the 2-acyl groups in 3-sn-phosphoglycerides. Very weakly suppress the acetylcholine (ACh)-evoked current mediated by alpha-7-similar nAChRs in L.stagnalis neurons. This Bungarus fasciatus (Banded krait) protein is Basic phospholipase A2 6.